Here is a 921-residue protein sequence, read N- to C-terminus: Isoleucine--tRNA ligase (921 aa).

The 'HIGH' region motif lies at 59–69; sequence PYANGHLHIGH. Glu569 lines the L-isoleucyl-5'-AMP pocket. Residues 610-614 carry the 'KMSKS' region motif; sequence KMSKS. Lys613 contributes to the ATP binding site. Residues Cys896, Cys899, Cys911, and Cys914 each coordinate Zn(2+).

It belongs to the class-I aminoacyl-tRNA synthetase family. IleS type 1 subfamily. In terms of assembly, monomer. It depends on Zn(2+) as a cofactor.

It localises to the cytoplasm. It carries out the reaction tRNA(Ile) + L-isoleucine + ATP = L-isoleucyl-tRNA(Ile) + AMP + diphosphate. Catalyzes the attachment of isoleucine to tRNA(Ile). As IleRS can inadvertently accommodate and process structurally similar amino acids such as valine, to avoid such errors it has two additional distinct tRNA(Ile)-dependent editing activities. One activity is designated as 'pretransfer' editing and involves the hydrolysis of activated Val-AMP. The other activity is designated 'posttransfer' editing and involves deacylation of mischarged Val-tRNA(Ile). The sequence is that of Isoleucine--tRNA ligase from Campylobacter hominis (strain ATCC BAA-381 / DSM 21671 / CCUG 45161 / LMG 19568 / NCTC 13146 / CH001A).